The sequence spans 98 residues: Co-chaperonin GroES (98 aa).

This sequence belongs to the GroES chaperonin family. Heptamer of 7 subunits arranged in a ring. Interacts with the chaperonin GroEL.

It localises to the cytoplasm. In terms of biological role, together with the chaperonin GroEL, plays an essential role in assisting protein folding. The GroEL-GroES system forms a nano-cage that allows encapsulation of the non-native substrate proteins and provides a physical environment optimized to promote and accelerate protein folding. GroES binds to the apical surface of the GroEL ring, thereby capping the opening of the GroEL channel. This is Co-chaperonin GroES from Micrococcus luteus (strain ATCC 4698 / DSM 20030 / JCM 1464 / CCM 169 / CCUG 5858 / IAM 1056 / NBRC 3333 / NCIMB 9278 / NCTC 2665 / VKM Ac-2230) (Micrococcus lysodeikticus).